The primary structure comprises 71 residues: MKLIALCCLLLLGLLGFLAAPGVASPSRHTGPGNGSGSGAGSGNPFRSPSSQQRPLYYDAPIGKPSKTMYA.

Positions 1 to 24 (MKLIALCCLLLLGLLGFLAAPGVA) are cleaved as a signal peptide. Residues 25–26 (SP) constitute a propeptide that is removed on maturation. Positions 26 to 71 (PSRHTGPGNGSGSGAGSGNPFRSPSSQQRPLYYDAPIGKPSKTMYA) are disordered. Over residues 32–42 (PGNGSGSGAGS) the composition is skewed to gly residues.

In terms of tissue distribution, hemolymph (at protein level).

It is found in the secreted. The sequence is that of Immune-induced peptide 18 (IM18) from Drosophila melanogaster (Fruit fly).